A 259-amino-acid polypeptide reads, in one-letter code: Trans-4-hydroxycyclohexanecarboxylate dehydrogenase (259 aa).

Residues Arg-20, Met-22, Asp-41, Asp-73, Val-74, Asn-100, Tyr-164, Lys-168, Val-197, Thr-199, and Thr-202 each coordinate NAD(+). Tyr-164 acts as the Proton acceptor in catalysis.

This sequence belongs to the short-chain dehydrogenases/reductases (SDR) family. In terms of assembly, homodimer. Homotetramer.

The catalysed reaction is trans-4-hydroxycyclohexane-1-carboxylate + NAD(+) = 4-oxocyclohexane-1-carboxylate + NADH + H(+). Its activity is regulated as follows. Strongly inhibited by N-bromosuccinimide. Not inhibited by sulfhydryl reagents, such as iodoacetic acid, iodoacetamide, N-ethylmaleimide and p-hydroxymercuribenzoic acid. In terms of biological role, dehydrogenase involved in a cyclohexanecarboxylate (CHCA) degradation pathway. Catalyzes the NAD(+)-dependent dehydrogenation of trans-4-hydroxycyclohexanecarboxylate (trans-4-hydroxyCHCA) to form 4-oxocyclohexanecarboxylate (4-oxoCHCA). Is highly specific for the trans-4-hydroxy derivative and shows only weak activity with cis-4-hydroxyCHCA. Can also catalyze the reverse reaction (4-oxoCHCA reduction) with a higher catalytic efficiency. In the reverse reaction, is highly specific for 4-oxoCHCA and cannot use either the 2-oxo or the 3-oxo homolog as substrate. Cannot use NADP(+). The protein is Trans-4-hydroxycyclohexanecarboxylate dehydrogenase of Sinomonas cyclohexanicum (Corynebacterium cyclohexanicum).